The chain runs to 326 residues: MRPLMLQGHERSITQIKYNREGDLLFSCSKDQKPNVWYSLNGERLGTYDGHQGAVWCLDVDWESRKLITGAGDMTAKIWDVEYGTVIASIPTKSSVRTSNFSFSGNQAAYSTDKAMGQSCELFLIDVRNADSSLSEQEPTLRIPMTESKITSMLWGPLDETIITGHDNGNIAIWDIRKGQKVVDSGTDHSAGINDMQLSKDGTMFVTASRDTTAKLFDSESLMCLKTYKTERPVNSAAISPIMDHVVLGGGQDAMEVTTTSTKAGKFDSRFFHLIYEEEFARLKGHFGPINSLAFHPDGKSYASGGEDGFVRVQTFDSTYFENIFE.

5 WD repeats span residues 8 to 47, 50 to 89, 145 to 184, 188 to 227, and 285 to 326; these read GHER…RLGT, GHQG…VIAS, MTES…KVVD, DHSA…CLKT, and GHFG…NIFE.

The protein belongs to the eIF-3 subunit I family. In terms of assembly, component of the eukaryotic translation initiation factor 3 (eIF-3) complex. The eIF-3 complex interacts with pix.

Its subcellular location is the cytoplasm. Component of the eukaryotic translation initiation factor 3 (eIF-3) complex, which is involved in protein synthesis of a specialized repertoire of mRNAs and, together with other initiation factors, stimulates binding of mRNA and methionyl-tRNAi to the 40S ribosome. The eIF-3 complex specifically targets and initiates translation of a subset of mRNAs involved in cell proliferation. This Drosophila simulans (Fruit fly) protein is Eukaryotic translation initiation factor 3 subunit I.